The primary structure comprises 74 residues: Exodeoxyribonuclease 7 small subunit (74 aa).

Belongs to the XseB family. In terms of assembly, heterooligomer composed of large and small subunits.

The protein resides in the cytoplasm. The catalysed reaction is Exonucleolytic cleavage in either 5'- to 3'- or 3'- to 5'-direction to yield nucleoside 5'-phosphates.. Functionally, bidirectionally degrades single-stranded DNA into large acid-insoluble oligonucleotides, which are then degraded further into small acid-soluble oligonucleotides. This Neisseria meningitidis serogroup A / serotype 4A (strain DSM 15465 / Z2491) protein is Exodeoxyribonuclease 7 small subunit.